The sequence spans 69 residues: Large ribosomal subunit protein bL31 (69 aa).

Positions 16, 18, 37, and 40 each coordinate Zn(2+).

The protein belongs to the bacterial ribosomal protein bL31 family. Type A subfamily. Part of the 50S ribosomal subunit. It depends on Zn(2+) as a cofactor.

Binds the 23S rRNA. This Buchnera aphidicola subsp. Cinara cedri (strain Cc) protein is Large ribosomal subunit protein bL31.